Reading from the N-terminus, the 158-residue chain is Cyclic pyranopterin monophosphate synthase (158 aa).

Substrate is bound by residues 74–76 (MCH) and 112–113 (ME). D127 is a catalytic residue.

This sequence belongs to the MoaC family. As to quaternary structure, homohexamer; trimer of dimers.

The catalysed reaction is (8S)-3',8-cyclo-7,8-dihydroguanosine 5'-triphosphate = cyclic pyranopterin phosphate + diphosphate. It functions in the pathway cofactor biosynthesis; molybdopterin biosynthesis. In terms of biological role, catalyzes the conversion of (8S)-3',8-cyclo-7,8-dihydroguanosine 5'-triphosphate to cyclic pyranopterin monophosphate (cPMP). The polypeptide is Cyclic pyranopterin monophosphate synthase (Helicobacter pylori (strain J99 / ATCC 700824) (Campylobacter pylori J99)).